The following is a 685-amino-acid chain: Stromal interaction molecule 1 (685 aa).

An N-terminal signal peptide occupies residues 1-22 (MDVCVRLALWLLWGLLLHQGQS). At 23–213 (LSHSHSEKAT…LLTRHNHLKD (191 aa)) the chain is on the extracellular side. 2 EF-hand domains span residues 64-97 (SFEAVRNIHKLMDDDANGDVDVEESDEFLREDLN) and 102-126 (TVKHSTFHGEDKLISVEDLWKAWKS). Positions 76, 78, 80, 82, and 87 each coordinate Ca(2+). N-linked (GlcNAc...) asparagine glycosylation is found at Asn131 and Asn171. The SAM domain maps to 132-200 (WTVDEVVQWL…QLKALDTVLF (69 aa)). The helical transmembrane segment at 214–234 (FMLVVSIVIGVGGCWFAYIQN) threads the bilayer. Residues 235–685 (RYSKEHMKKM…LKIFKKPLKK (451 aa)) lie on the Cytoplasmic side of the membrane. Residues 248 to 442 (LEGLHRAEQS…IEILCGFQIV (195 aa)) adopt a coiled-coil conformation. Ser257 is subject to Phosphoserine. Positions 344–442 (PEALQKWLQL…IEILCGFQIV (99 aa)) are SOAR/CAD. A contributes to fast Ca(2+)-dependent inactivation of CRAC channels region spans residues 475–483 (DDVDDMDEE). Residues 490–499 (MQSPSLQSSV) are compositionally biased toward low complexity. The disordered stretch occupies residues 490–542 (MQSPSLQSSVRQRLTEPQHGLGSQRDLTHSDSESSLHMSDRQRVAPKPPQMSR). A Phosphothreonine modification is found at Thr504. Position 512 is a phosphoserine (Ser512). Basic and acidic residues predominate over residues 515 to 532 (DLTHSDSESSLHMSDRQR). Position 517 is a phosphothreonine (Thr517). Phosphoserine occurs at positions 519, 521, 523, 524, 567, 575, 602, 608, 618, 621, and 628. Residues 596-685 (LMELSPSAPP…LKIFKKPLKK (90 aa)) form a disordered region. Positions 608 to 620 (SPHLDSSRSHSPS) are enriched in low complexity. The short motif at 642–645 (TRIP) is the Microtubule tip localization signal element. The span at 655–666 (EEDNGSIGEETD) shows a compositional bias: acidic residues. At Ser660 the chain carries Phosphoserine. Phosphothreonine is present on Thr665. Position 668 is a phosphoserine (Ser668). Positions 670 to 685 (GRKKFPLKIFKKPLKK) are enriched in basic residues. Residues 672-685 (KKFPLKIFKKPLKK) are required for generation of inwardly rectifying CRAC currents.

In terms of assembly, monomer in the presence of Ca(2+); it oligomerizes in absence of Ca(2+). Forms homooligomers and heterooligomers with STIM2. Interacts with pore-forming subunits of CRAC channels, ORAI1, ORAI2 and ORAI3; this interaction is potentiated upon Ca(2+) store depletion. Interacts (via the transmembrane region and the SOAR/CAD domain) with SPPL3; the interaction promotes the binding of STIM1 to ORAI1. Interacts (via the SOAR/CAD domain) with ORAI1. Interacts with MAPRE1; probably required for targeting to the growing microtubule plus ends. Interacts with CRACR2A/EFCAB4B; the interaction is direct and takes place in absence of Ca(2+). Forms a complex with CRACR2A/EFCAB4B and ORAI1 at low concentration of Ca(2+), the complex dissociates at elevated Ca(2+) concentrations. Interacts with SARAF, promoting a slow inactivation of STIM1-dependent SOCE activity, possibly by facilitating the deoligomerization of STIM1. Interacts with EFHB; the interaction takes place upon Ca(2+)-store depletion and inhibits the association with SARAF. Interacts with ASPH (isoform 8). Interacts with SLC35G1; intracellular Ca(2+)-dependent. May interact with ATP1A1, ATP2A2, ATP2B1, ATP2B4, KPNB1 and XPO1; through SLC35G1. Interacts with TMEM203. Interacts with STIMATE, promoting STIM1 conformational switch. Interacts with TMEM178A. Interacts with CASQ1 (via C-terminal end and preferentially with the monomeric form); this interaction increases in response to a depletion of intracellular Ca(2+), decreases both STIM1 aggregation and clustering, interaction of STIM1 with ORAI1 and store-operated Ca(2+) entry (SOCE) activity. Interacts with ADCY8. Post-translationally, glycosylation is required for cell surface expression. Phosphorylated predominantly on Ser residues. As to expression, ubiquitously expressed in various human primary cells and tumor cell lines.

Its subcellular location is the cell membrane. The protein resides in the endoplasmic reticulum membrane. The protein localises to the cytoplasm. It is found in the cytoskeleton. It localises to the sarcoplasmic reticulum. Its function is as follows. Acts as a Ca(2+) sensor that gates two major inward rectifying Ca(2+) channels at the plasma membrane: Ca(2+) release-activated Ca(2+) (CRAC) channels and arachidonate-regulated Ca(2+)-selective (ARC) channels. Plays a role in mediating store-operated Ca(2+) entry (SOCE), a Ca(2+) influx following depletion of intracellular Ca(2+) stores. Upon Ca(2+) depletion, translocates from the endoplasmic reticulum to the plasma membrane where it activates CRAC channel pore-forming subunits ORA1, ORA2 and ORAI3 to generate sustained and oscillatory Ca(2+) entry. Involved in enamel formation. The protein is Stromal interaction molecule 1 (STIM1) of Homo sapiens (Human).